The chain runs to 260 residues: Indole-3-glycerol phosphate synthase (260 aa).

It belongs to the TrpC family.

It catalyses the reaction 1-(2-carboxyphenylamino)-1-deoxy-D-ribulose 5-phosphate + H(+) = (1S,2R)-1-C-(indol-3-yl)glycerol 3-phosphate + CO2 + H2O. Its pathway is amino-acid biosynthesis; L-tryptophan biosynthesis; L-tryptophan from chorismate: step 4/5. This chain is Indole-3-glycerol phosphate synthase, found in Koribacter versatilis (strain Ellin345).